The sequence spans 356 residues: MDAGVTESGLNVTLTIRLLMHGKEVGSIIGKKGESVKRIREESGARINISEGNCPERIITLTGPTNAIFKAFAMIIDKLEEDINSSMTNSTAASRPPVTLRLVVPATQCGSLIGKGGCKIKEIRESTGAQVQVAGDMLPNSTERAITIAGVPQSVTECVKQICLVMLETLSQSPQGRVMTIPYQPMPASSPVICAGGQDRCSDAAGYPHATHDLEGPPLDAYSIQGQHTISPLDLAKLNQVARQQSHFAMMHGGTGFAGIDSSSPEVKGYWASLDASTQTTHELTIPNNLIGCIIGRQGANINEIRQMSGAQIKIANPVEGSSGRQVTITGSAASISLAQYLINARLSSEKGMGCS.

Methionine 1 carries the N-acetylmethionine modification. KH domains lie at 13 to 75 and 97 to 162; these read TLTI…FAMI and PVTL…VKQI. Residue lysine 115 forms a Glycyl lysine isopeptide (Lys-Gly) (interchain with G-Cter in SUMO2) linkage. Residues serine 173, serine 189, serine 190, serine 246, serine 264, and serine 273 each carry the phosphoserine modification. A KH 3 domain is found at 279–343; it reads QTTHELTIPN…ASISLAQYLI (65 aa).

Post-translationally, phosphorylated; lowers poly(rC)-binding activity.

It is found in the nucleus. The protein resides in the cytoplasm. Single-stranded nucleic acid binding protein that binds preferentially to oligo dC. Together with PCBP2, required for erythropoiesis, possibly by regulating mRNA splicing. The chain is Poly(rC)-binding protein 1 (PCBP1) from Bos taurus (Bovine).